The primary structure comprises 374 residues: Beta sliding clamp (374 aa).

The protein belongs to the beta sliding clamp family. In terms of assembly, forms a ring-shaped head-to-tail homodimer around DNA which binds and tethers DNA polymerases and other proteins to the DNA. The DNA replisome complex has a single clamp-loading complex (3 tau and 1 each of delta, delta', psi and chi subunits) which binds 3 Pol III cores (1 core on the leading strand and 2 on the lagging strand) each with a beta sliding clamp dimer. Additional proteins in the replisome are other copies of gamma, psi and chi, Ssb, DNA helicase and RNA primase.

It localises to the cytoplasm. In terms of biological role, confers DNA tethering and processivity to DNA polymerases and other proteins. Acts as a clamp, forming a ring around DNA (a reaction catalyzed by the clamp-loading complex) which diffuses in an ATP-independent manner freely and bidirectionally along dsDNA. Initially characterized for its ability to contact the catalytic subunit of DNA polymerase III (Pol III), a complex, multichain enzyme responsible for most of the replicative synthesis in bacteria; Pol III exhibits 3'-5' exonuclease proofreading activity. The beta chain is required for initiation of replication as well as for processivity of DNA replication. This is Beta sliding clamp (dnaN) from Helicobacter pylori (strain ATCC 700392 / 26695) (Campylobacter pylori).